The chain runs to 893 residues: MDKDVQEITDSKQQLTEAAFSNHTPMMQQYLRIKAEHPETLVFYRMGDFYELFFEDAEKAARLLDLTLTQRGASAGTPIKMAGVPHHAVEQYLAKLVKFGESAAICEQIGDPATSKGPVERKVVRVVTPGTLTDAALLSDKSDVFLLALCVGHNKRGVASTIGLAWLNLASGALRLAEIAPDQLGAALERIRPAEILAADGAIEAVPAGTGAITRVPAWHFDIASGTQRLCDQLEVASLDGFGAQALTSANGAAGALLIYAAATQGQQLRHVRSLKVENESEYIGLDPSTRRNLELTETLRGTESPTLYSLLDTCCTAMGSRLLRHWLHHPPRASVAAQARHQAIGALLDAPVHVGLDSLRSALRQIADVERITGRLALLSARPRDLSSLRDTFAALPALRERVAEIAPNAAALGRLEAALEPPPGCLDLLTRAIAPEPAAMVRDGGVIARGYDAELDELRDISENCGQFLIDLETRERARTGIPNLRVEYNKVHGFYIEVTRGQTDKVPDDYRRRQTLKNAERYITPELKTFEDKALSAQERALARERALYDSVLQALLPHIEGCQRVASGLAELDLLAAFAERARTLDWVAPEFIDEIGIEIDQGRHPVVEAQVEQFIANDCALNSDRKLLLITGPNMGGKSTFMRQTALIALMAYVGSYVPAKAARFGPIDRIFTRIGAADDLAGGRSTFMVEMTEAAAILNDATPQSLVLMDEIGRGTSTFDGLALAWAIARHLLSHNRCYTLFATHYFELTQLPAEFPQAANVHLSAVEHGHGIVFLHAVEEGPANQSYGLQVAQLAGVPAPVIRAARKHLAHLEQQSAAQATPQLDLFAAQPIVDEQECNQPPAAAPHPALERLLALDPDDLKPRDALDLLYELRALARSGATDAQR.

637–644 provides a ligand contact to ATP; sequence GPNMGGKS.

It belongs to the DNA mismatch repair MutS family.

In terms of biological role, this protein is involved in the repair of mismatches in DNA. It is possible that it carries out the mismatch recognition step. This protein has a weak ATPase activity. This Burkholderia thailandensis (strain ATCC 700388 / DSM 13276 / CCUG 48851 / CIP 106301 / E264) protein is DNA mismatch repair protein MutS.